A 572-amino-acid chain; its full sequence is Oxygen-dependent choline dehydrogenase (572 aa).

7–36 contributes to the FAD binding site; the sequence is DYIIIGAGSAGNVLATRLTEDRDVTVLLLE. His474 serves as the catalytic Proton acceptor.

It belongs to the GMC oxidoreductase family. The cofactor is FAD.

The enzyme catalyses choline + A = betaine aldehyde + AH2. It catalyses the reaction betaine aldehyde + NAD(+) + H2O = glycine betaine + NADH + 2 H(+). It functions in the pathway amine and polyamine biosynthesis; betaine biosynthesis via choline pathway; betaine aldehyde from choline (cytochrome c reductase route): step 1/1. Its function is as follows. Involved in the biosynthesis of the osmoprotectant glycine betaine. Catalyzes the oxidation of choline to betaine aldehyde and betaine aldehyde to glycine betaine at the same rate. The polypeptide is Oxygen-dependent choline dehydrogenase (Paraburkholderia phymatum (strain DSM 17167 / CIP 108236 / LMG 21445 / STM815) (Burkholderia phymatum)).